Here is a 213-residue protein sequence, read N- to C-terminus: uncharacterized protein (213 aa).

This is an uncharacterized protein from Homo sapiens (Human).